A 662-amino-acid chain; its full sequence is U6 snRNA-specific terminal uridylyltransferase (662 aa).

Mg(2+) contacts are provided by D183 and D185. In terms of domain architecture, PAP-associated spans 384 to 437 (CKFFRELFKYYANFDFTNKAIYGKKAMQKKTLSSAHGGVEESPLMLMDPMDITH).

It belongs to the DNA polymerase type-B-like family. Forms a complex composed of sart-3, terminal uridylyltransferase usip-1 and U6 snRNA; complex formation is mediated by usip-1 and sart-3 binding to U6 snRNA. The cofactor is Mg(2+). Requires Mn(2+) as cofactor. In terms of tissue distribution, ubiquitously expressed.

It localises to the nucleus. The protein localises to the nucleoplasm. The enzyme catalyses RNA(n) + UTP = RNA(n)-3'-uridine ribonucleotide + diphosphate. In terms of biological role, acts as a specific terminal uridylyltransferase for U6 snRNA. Responsible for the addition of UTP at the 3' end of U6 snRNA which stabilizes U6 snRNA. Does not have activity towards modified uridine containing 3'-monophosphorylation or 2'-O-methylation. This is U6 snRNA-specific terminal uridylyltransferase from Caenorhabditis elegans.